Reading from the N-terminus, the 142-residue chain is Large ribosomal subunit protein uL11 (142 aa).

It belongs to the universal ribosomal protein uL11 family. As to quaternary structure, part of the ribosomal stalk of the 50S ribosomal subunit. Interacts with L10 and the large rRNA to form the base of the stalk. L10 forms an elongated spine to which L12 dimers bind in a sequential fashion forming a multimeric L10(L12)X complex. One or more lysine residues are methylated.

Forms part of the ribosomal stalk which helps the ribosome interact with GTP-bound translation factors. In Shewanella amazonensis (strain ATCC BAA-1098 / SB2B), this protein is Large ribosomal subunit protein uL11.